The chain runs to 264 residues: GTP cyclohydrolase FolE2 (264 aa).

The protein belongs to the GTP cyclohydrolase IV family.

It carries out the reaction GTP + H2O = 7,8-dihydroneopterin 3'-triphosphate + formate + H(+). Its pathway is cofactor biosynthesis; 7,8-dihydroneopterin triphosphate biosynthesis; 7,8-dihydroneopterin triphosphate from GTP: step 1/1. Functionally, converts GTP to 7,8-dihydroneopterin triphosphate. The protein is GTP cyclohydrolase FolE2 of Akkermansia muciniphila (strain ATCC BAA-835 / DSM 22959 / JCM 33894 / BCRC 81048 / CCUG 64013 / CIP 107961 / Muc).